The chain runs to 119 residues: Basic phospholipase A2 notexin (119 aa).

7 cysteine pairs are disulfide-bonded: Cys-11/Cys-71, Cys-27/Cys-118, Cys-29/Cys-45, Cys-44/Cys-99, Cys-51/Cys-92, Cys-60/Cys-85, and Cys-78/Cys-90. Tyr-28, Gly-30, and Gly-32 together coordinate Ca(2+). The active site involves His-48. Position 49 (Asp-49) interacts with Ca(2+). The active site involves Asp-93.

This sequence belongs to the phospholipase A2 family. Group I subfamily. D49 sub-subfamily. In terms of assembly, monomer. The cofactor is Ca(2+). As to expression, expressed by the venom gland.

The protein localises to the secreted. The catalysed reaction is a 1,2-diacyl-sn-glycero-3-phosphocholine + H2O = a 1-acyl-sn-glycero-3-phosphocholine + a fatty acid + H(+). In terms of biological role, snake venom phospholipase A2 (PLA2) that inhibits neuromuscular transmission by blocking acetylcholine release from the nerve termini. Is directly toxic to skeletal muscle upon local application in vivo (dystrophic effect). Also has direct nephrotoxicity in experimental mice; a single subcutaneous dose (1.38 ug/kg) produces renal tubular and glomerular damage within 24 hours. PLA2 catalyzes the calcium-dependent hydrolysis of the 2-acyl groups in 3-sn-phosphoglycerides. The sequence is that of Basic phospholipase A2 notexin from Notechis scutatus scutatus (Mainland tiger snake).